The chain runs to 452 residues: Activating transcription factor 7-interacting protein 2 (452 aa).

Serine 184 is subject to Phosphoserine. Residues 185-206 (RSKRISSVNHTPLNSSEKAGRK) are disordered. Position 257 is a phosphoserine (serine 257). Residues 346-450 (PPQKPELKVK…IKSIPRFSEN (105 aa)) enclose the Fibronectin type-III domain.

Belongs to the MCAF family. Interacts with MBD1, SETDB1 and SP1. Probably forms a complex with SETDB1 and MBD1. As to expression, expressed in testis.

The protein localises to the nucleus. Its function is as follows. Recruiter that couples transcriptional factors to general transcription apparatus and thereby modulates transcription regulation and chromatin formation. Can both act as an activator or a repressor depending on the context. Mediates MBD1-dependent transcriptional repression, probably by recruiting complexes containing SETDB1. The complex formed with MBD1 and SETDB1 represses transcription and probably couples DNA methylation and histone H3 'Lys-9' trimethylation (H3K9me3) activity. The chain is Activating transcription factor 7-interacting protein 2 (Atf7ip2) from Mus musculus (Mouse).